The sequence spans 289 residues: NAD(P)H-hydrate epimerase (289 aa).

The region spanning 71–277 is the YjeF N-terminal domain; that stretch reads AQTIDNELMS…SIVEKYNLKV (207 aa). 122–126 contacts (6S)-NADPHX; the sequence is NNGGD. K(+)-binding residues include Asn-123 and Asp-185. Residues 189–195 and Asp-218 each bind (6S)-NADPHX; that span reads GFSFTGE. Ser-221 lines the K(+) pocket.

Belongs to the NnrE/AIBP family. K(+) serves as cofactor.

The enzyme catalyses (6R)-NADHX = (6S)-NADHX. The catalysed reaction is (6R)-NADPHX = (6S)-NADPHX. Its function is as follows. Catalyzes the epimerization of the S- and R-forms of NAD(P)HX, a damaged form of NAD(P)H that is a result of enzymatic or heat-dependent hydration. This is a prerequisite for the S-specific NAD(P)H-hydrate dehydratase to allow the repair of both epimers of NAD(P)HX. This is NAD(P)H-hydrate epimerase from Plasmodium vivax (strain Salvador I).